The primary structure comprises 231 residues: Orotate phosphoribosyltransferase (231 aa).

5-phospho-alpha-D-ribose 1-diphosphate is bound by residues lysine 27, 79–80 (YK), arginine 106, lysine 107, lysine 110, histidine 112, and 133–141 (DDVMTAGTA). Orotate-binding residues include threonine 137 and arginine 166.

The protein belongs to the purine/pyrimidine phosphoribosyltransferase family. PyrE subfamily. As to quaternary structure, homodimer. It depends on Mg(2+) as a cofactor.

The enzyme catalyses orotidine 5'-phosphate + diphosphate = orotate + 5-phospho-alpha-D-ribose 1-diphosphate. It functions in the pathway pyrimidine metabolism; UMP biosynthesis via de novo pathway; UMP from orotate: step 1/2. Its function is as follows. Catalyzes the transfer of a ribosyl phosphate group from 5-phosphoribose 1-diphosphate to orotate, leading to the formation of orotidine monophosphate (OMP). In Bifidobacterium longum (strain DJO10A), this protein is Orotate phosphoribosyltransferase.